A 157-amino-acid polypeptide reads, in one-letter code: SsrA-binding protein (157 aa).

A compositionally biased stretch (basic and acidic residues) spans 134 to 151 (HDKRETEKKRDWSKEKGR). Residues 134 to 157 (HDKRETEKKRDWSKEKGRLMRAKG) are disordered.

It belongs to the SmpB family.

Its subcellular location is the cytoplasm. Its function is as follows. Required for rescue of stalled ribosomes mediated by trans-translation. Binds to transfer-messenger RNA (tmRNA), required for stable association of tmRNA with ribosomes. tmRNA and SmpB together mimic tRNA shape, replacing the anticodon stem-loop with SmpB. tmRNA is encoded by the ssrA gene; the 2 termini fold to resemble tRNA(Ala) and it encodes a 'tag peptide', a short internal open reading frame. During trans-translation Ala-aminoacylated tmRNA acts like a tRNA, entering the A-site of stalled ribosomes, displacing the stalled mRNA. The ribosome then switches to translate the ORF on the tmRNA; the nascent peptide is terminated with the 'tag peptide' encoded by the tmRNA and targeted for degradation. The ribosome is freed to recommence translation, which seems to be the essential function of trans-translation. The sequence is that of SsrA-binding protein from Rhodopseudomonas palustris (strain BisA53).